The following is a 371-amino-acid chain: UDP-N-acetylglucosamine--N-acetylmuramyl-(pentapeptide) pyrophosphoryl-undecaprenol N-acetylglucosamine transferase (371 aa).

UDP-N-acetyl-alpha-D-glucosamine is bound by residues 15-17 (TGG), N126, R172, S199, I256, 275-280 (ALTVSE), and Q301.

Belongs to the glycosyltransferase 28 family. MurG subfamily.

Its subcellular location is the cell inner membrane. The enzyme catalyses di-trans,octa-cis-undecaprenyl diphospho-N-acetyl-alpha-D-muramoyl-L-alanyl-D-glutamyl-meso-2,6-diaminopimeloyl-D-alanyl-D-alanine + UDP-N-acetyl-alpha-D-glucosamine = di-trans,octa-cis-undecaprenyl diphospho-[N-acetyl-alpha-D-glucosaminyl-(1-&gt;4)]-N-acetyl-alpha-D-muramoyl-L-alanyl-D-glutamyl-meso-2,6-diaminopimeloyl-D-alanyl-D-alanine + UDP + H(+). Its pathway is cell wall biogenesis; peptidoglycan biosynthesis. In terms of biological role, cell wall formation. Catalyzes the transfer of a GlcNAc subunit on undecaprenyl-pyrophosphoryl-MurNAc-pentapeptide (lipid intermediate I) to form undecaprenyl-pyrophosphoryl-MurNAc-(pentapeptide)GlcNAc (lipid intermediate II). In Francisella tularensis subsp. tularensis (strain FSC 198), this protein is UDP-N-acetylglucosamine--N-acetylmuramyl-(pentapeptide) pyrophosphoryl-undecaprenol N-acetylglucosamine transferase.